The following is a 501-amino-acid chain: Aldehyde dehydrogenase family 2 member C4 (501 aa).

245 to 250 (GSTDVG) contacts NAD(+). E268 acts as the Proton acceptor in catalysis. Catalysis depends on C302, which acts as the Nucleophile.

The protein belongs to the aldehyde dehydrogenase family. In terms of assembly, homotetramer.

The protein localises to the cytoplasm. The protein resides in the cytosol. The enzyme catalyses an aldehyde + NAD(+) + H2O = a carboxylate + NADH + 2 H(+). Its function is as follows. Involved in ferulic acid and sinapic acid biosynthesis by oxidation of conyferylaldehyde and sinapaldehyde, respectively. Can oxidize L-lactaldehyde. Possesses activity on acetaldehyde and glycolaldehyde in vitro. The chain is Aldehyde dehydrogenase family 2 member C4 (ALDH2C4) from Arabidopsis thaliana (Mouse-ear cress).